Consider the following 345-residue polypeptide: Phosphoribosylformylglycinamidine cyclo-ligase (345 aa).

Belongs to the AIR synthase family.

The protein localises to the cytoplasm. The catalysed reaction is 2-formamido-N(1)-(5-O-phospho-beta-D-ribosyl)acetamidine + ATP = 5-amino-1-(5-phospho-beta-D-ribosyl)imidazole + ADP + phosphate + H(+). Its pathway is purine metabolism; IMP biosynthesis via de novo pathway; 5-amino-1-(5-phospho-D-ribosyl)imidazole from N(2)-formyl-N(1)-(5-phospho-D-ribosyl)glycinamide: step 2/2. The chain is Phosphoribosylformylglycinamidine cyclo-ligase from Actinobacillus succinogenes (strain ATCC 55618 / DSM 22257 / CCUG 43843 / 130Z).